Reading from the N-terminus, the 98-residue chain is VQ motif-containing protein 1 (98 aa).

The short motif at 27 to 36 is the VQ element; sequence FKTIVQELTG.

In terms of assembly, interacts with WRKY33.

The protein localises to the nucleus. Its function is as follows. May modulate WRKY transcription factor activities. The polypeptide is VQ motif-containing protein 1 (Arabidopsis thaliana (Mouse-ear cress)).